Consider the following 296-residue polypeptide: Glycine N-acyltransferase (296 aa).

Lys16 carries the post-translational modification N6-acetyllysine; alternate. Lys16 is modified (N6-succinyllysine; alternate). N6-acetyllysine is present on Lys113. N6-acetyllysine; alternate occurs at positions 127 and 142. An N6-succinyllysine; alternate mark is found at Lys127 and Lys142. Position 159 is an N6-acetyllysine (Lys159). Lys169 bears the N6-succinyllysine mark. An N6-acetyllysine; alternate mark is found at Lys183 and Lys256. An N6-succinyllysine; alternate mark is found at Lys183 and Lys256. An N6-succinyllysine modification is found at Lys267.

It belongs to the glycine N-acyltransferase family.

The protein resides in the mitochondrion. It catalyses the reaction an acyl-CoA + glycine = an N-acylglycine + CoA + H(+). The enzyme catalyses benzoyl-CoA + glycine = N-benzoylglycine + CoA + H(+). In terms of biological role, mitochondrial acyltransferase which transfers an acyl group to the N-terminus of glycine and glutamine, although much less efficiently. Can conjugate a multitude of substrates to form a variety of N-acylglycines, thereby detoxify xenobiotics, such as benzoic acid or salicylic acid, and endogenous organic acids, such as isovaleric acid. The sequence is that of Glycine N-acyltransferase (Glyat) from Rattus norvegicus (Rat).